Reading from the N-terminus, the 983-residue chain is UPF0182 protein CMM_1204 (983 aa).

7 helical membrane-spanning segments follow: residues 16–36 (LAIT…FAGF), 56–76 (WGAG…PVFV), 108–128 (LAMF…ASSG), 161–181 (FYHA…LGVL), 205–225 (IQIA…IWLD), 255–275 (AILA…AVIG), and 281–301 (IIGT…YPAI). Positions 699 to 714 (QDLWTTPNDPTATTEA) are enriched in polar residues. Disordered regions lie at residues 699–718 (QDLW…GTPA) and 884–936 (DSGA…AQDV). A compositionally biased stretch (gly residues) spans 902 to 918 (GGTGDGATDGATDGGTG). A compositionally biased stretch (low complexity) spans 919 to 933 (STPTPAPTTSPSAPA).

The protein belongs to the UPF0182 family.

The protein resides in the cell membrane. The protein is UPF0182 protein CMM_1204 of Clavibacter michiganensis subsp. michiganensis (strain NCPPB 382).